The chain runs to 358 residues: Mannonate dehydratase (358 aa).

It belongs to the mannonate dehydratase family. The cofactor is Fe(2+). Mn(2+) is required as a cofactor.

It carries out the reaction D-mannonate = 2-dehydro-3-deoxy-D-gluconate + H2O. The protein operates within carbohydrate metabolism; pentose and glucuronate interconversion. Functionally, catalyzes the dehydration of D-mannonate. This chain is Mannonate dehydratase, found in Shouchella clausii (strain KSM-K16) (Alkalihalobacillus clausii).